The chain runs to 728 residues: Procollagen-lysine,2-oxoglutarate 5-dioxygenase 1 (728 aa).

A signal peptide spans 1–18 (MRSLLLLASLAWLLLAQA). Residues N177, N198, and N539 are each glycosylated (N-linked (GlcNAc...) asparagine). A Fe2OG dioxygenase domain is found at 637 to 728 (QFDLAFVVRY…RYIAVSFVDP (92 aa)). Fe cation is bound by residues H657 and D659. Residue N687 is glycosylated (N-linked (GlcNAc...) asparagine). Residue H709 coordinates Fe cation. R719 is an active-site residue.

In terms of assembly, homodimer. Identified in a complex with P3H3 and P3H4. The cofactor is Fe(2+). It depends on L-ascorbate as a cofactor.

It localises to the rough endoplasmic reticulum membrane. The catalysed reaction is L-lysyl-[collagen] + 2-oxoglutarate + O2 = (5R)-5-hydroxy-L-lysyl-[collagen] + succinate + CO2. Part of a complex composed of PLOD1, P3H3 and P3H4 that catalyzes hydroxylation of lysine residues in collagen alpha chains and is required for normal assembly and cross-linkling of collagen fibrils. Forms hydroxylysine residues in -Xaa-Lys-Gly- sequences in collagens. These hydroxylysines serve as sites of attachment for carbohydrate units and are essential for the stability of the intermolecular collagen cross-links. The sequence is that of Procollagen-lysine,2-oxoglutarate 5-dioxygenase 1 (Plod1) from Rattus norvegicus (Rat).